Reading from the N-terminus, the 272-residue chain is MSAFEQLFQGRLPRLVMFDLDGTLVDSVPDLAAAVDQMLLKLGRKPAGVEAVREWVGNGAPMLVRRALANSLEAQGVDDVEAEYALELFNTAYEDSHELTVVYPGARETLKWLHKQGVEMALITNKPERFVAPLLDQMKIGRYFRWIIGGDTLPQKKPDPAALFFVMKMASVPASQSLFVGDSRSDVLAAKAAGVKCVALSYGYNHGRPIAEESPALVIDNLRALIPGCLEPAAEITLPDAVPSHSGNSIVVVTRKLWMKVIKALARWRWRA.

D19 functions as the Nucleophile in the catalytic mechanism. Mg(2+)-binding residues include D19, D21, and D182.

It belongs to the HAD-like hydrolase superfamily. CbbY/CbbZ/Gph/YieH family. Mg(2+) is required as a cofactor.

The enzyme catalyses 2-phosphoglycolate + H2O = glycolate + phosphate. Its pathway is organic acid metabolism; glycolate biosynthesis; glycolate from 2-phosphoglycolate: step 1/1. Its function is as follows. Specifically catalyzes the dephosphorylation of 2-phosphoglycolate. Is involved in the dissimilation of the intracellular 2-phosphoglycolate formed during the DNA repair of 3'-phosphoglycolate ends, a major class of DNA lesions induced by oxidative stress. The polypeptide is Phosphoglycolate phosphatase (Pseudomonas fluorescens (strain ATCC BAA-477 / NRRL B-23932 / Pf-5)).